Here is a 152-residue protein sequence, read N- to C-terminus: Catabolic 3-dehydroquinase 1 (152 aa).

The active-site Proton acceptor is the Tyr-24. Positions 75, 81, and 88 each coordinate substrate. His-101 serves as the catalytic Proton donor. Residues 102–103 and Arg-112 contribute to the substrate site; that span reads VS.

Belongs to the type-II 3-dehydroquinase family. As to quaternary structure, homododecamer. Adopts a ring-like structure, composed of an arrangement of two hexameric rings stacked on top of one another.

It catalyses the reaction 3-dehydroquinate = 3-dehydroshikimate + H2O. It functions in the pathway aromatic compound metabolism; 3,4-dihydroxybenzoate biosynthesis; 3,4-dihydroxybenzoate from 3-dehydroquinate: step 1/2. Is involved in the catabolism of quinate. Allows the utilization of quinate as carbon source via the beta-ketoadipate pathway. The sequence is that of Catabolic 3-dehydroquinase 1 from Aspergillus terreus (strain NIH 2624 / FGSC A1156).